We begin with the raw amino-acid sequence, 295 residues long: Protease HtpX (295 aa).

2 helical membrane passes run 4–24 (IVLF…ILSL) and 34–54 (GLMI…LLMS). Histidine 139 is a Zn(2+) binding site. The active site involves glutamate 140. A Zn(2+)-binding site is contributed by histidine 143. Transmembrane regions (helical) follow at residues 147 to 167 (GDMV…IFIS) and 194 to 214 (IVYM…ASII). A Zn(2+)-binding site is contributed by glutamate 223.

It belongs to the peptidase M48B family. Zn(2+) serves as cofactor.

The protein localises to the cell inner membrane. This is Protease HtpX from Photorhabdus laumondii subsp. laumondii (strain DSM 15139 / CIP 105565 / TT01) (Photorhabdus luminescens subsp. laumondii).